The chain runs to 277 residues: Caspase-3 (277 aa).

M1 carries the N-acetylmethionine modification. 2 consecutive propeptides follow at residues M1–D9 and S10–D28. Position 11 is an N6-acetyllysine (K11). S26 carries the post-translational modification Phosphoserine. Catalysis depends on residues H121 and C163. At C163 the chain carries S-nitrosocysteine; in inhibited form.

This sequence belongs to the peptidase C14A family. Heterotetramer that consists of two anti-parallel arranged heterodimers, each one formed by a 17 kDa (p17) and a 12 kDa (p12) subunit. Interacts with BIRC6/bruce. Post-translationally, cleavage by granzyme B, caspase-6, caspase-8 and caspase-10 generates the two active subunits. Additional processing of the propeptides is likely due to the autocatalytic activity of the activated protease. Active heterodimers between the small subunit of caspase-7 protease and the large subunit of caspase-3 also occur and vice versa. S-nitrosylated on its catalytic site cysteine in unstimulated cell lines and denitrosylated upon activation of the Fas apoptotic pathway, associated with an increase in intracellular caspase activity. Fas therefore activates caspase-3 not only by inducing the cleavage of the caspase zymogen to its active subunits, but also by stimulating the denitrosylation of its active site thiol. In terms of processing, ubiquitinated by BIRC6; this activity is inhibited by DIABLO/SMAC. As to expression, expressed in heart, brain, liver, and muscle but not in kidney or testis.

It is found in the cytoplasm. It catalyses the reaction Strict requirement for an Asp residue at positions P1 and P4. It has a preferred cleavage sequence of Asp-Xaa-Xaa-Asp-|- with a hydrophobic amino-acid residue at P2 and a hydrophilic amino-acid residue at P3, although Val or Ala are also accepted at this position.. Its activity is regulated as follows. Inhibited by BIRC6; following inhibition of BIRC6-caspase binding by DIABLO/SMAC, BIRC6 is subjected to caspase cleavage, leading to an increase in active caspases. Involved in the activation cascade of caspases responsible for apoptosis execution. At the onset of apoptosis, it proteolytically cleaves poly(ADP-ribose) polymerase PARP1 at a '216-Asp-|-Gly-217' bond. Cleaves and activates sterol regulatory element binding proteins (SREBPs) between the basic helix-loop-helix leucine zipper domain and the membrane attachment domain. Cleaves and activates caspase-6, -7 and -9 (CASP6, CASP7 and CASP9, respectively). Cleaves and inactivates interleukin-18 (IL18). Triggers cell adhesion in sympathetic neurons through RET cleavage. Cleaves IL-1 beta between an Asp and an Ala, releasing the mature cytokine which is involved in a variety of inflammatory processes. Cleaves and inhibits serine/threonine-protein kinase AKT1 in response to oxidative stress. Acts as an inhibitor of type I interferon production during virus-induced apoptosis by mediating cleavage of antiviral proteins CGAS, IRF3 and MAVS, thereby preventing cytokine overproduction. Also involved in pyroptosis by mediating cleavage and activation of gasdermin-E (GSDME). Cleaves XRCC4 and phospholipid scramblase proteins XKR4, XKR8 and XKR9, leading to promote phosphatidylserine exposure on apoptotic cell surface. Cleaves BIRC6 following inhibition of BIRC6-caspase binding by DIABLO/SMAC. The sequence is that of Caspase-3 (Casp3) from Rattus norvegicus (Rat).